A 407-amino-acid chain; its full sequence is Lysosome-associated membrane glycoprotein 1 (407 aa).

The N-terminal stretch at 1–21 (MAAPGAPRSLLLLLLAGLAHG) is a signal peptide. The interval 22-189 (ASALFVVKDS…SKEETRCTQD (168 aa)) is first lumenal domain. The Lumenal portion of the chain corresponds to 22–371 (ASALFVVKDS…VEECMQDGNN (350 aa)). N-linked (GlcNAc...) asparagine glycans are attached at residues asparagine 32, asparagine 40, asparagine 57, asparagine 72, asparagine 79, asparagine 98, asparagine 102, asparagine 116, asparagine 125, asparagine 145, asparagine 160, and asparagine 178. The cysteines at positions 36 and 75 are disulfide-linked. The cysteines at positions 150 and 186 are disulfide-linked. Residues 183–206 (ETRCTQDGPSPTTVPPSPSPPLVP) are disordered. Residues 190–219 (GPSPTTVPPSPSPPLVPTNPTVIKYNVTGE) are hinge. The segment covering 194–206 (TTVPPSPSPPLVP) has biased composition (pro residues). N-linked (GlcNAc...) asparagine glycans are attached at residues asparagine 215, asparagine 220, asparagine 233, asparagine 241, asparagine 253, asparagine 283, asparagine 297, asparagine 304, and asparagine 312. Residues 220-371 (NGTCLLASMA…VEECMQDGNN (152 aa)) are second lumenal domain. Residues cysteine 223 and cysteine 260 are joined by a disulfide bond. Cysteine 328 and cysteine 365 are oxidised to a cystine. Residues 372-395 (MLIPIAVGGALAGLVLIVLIAYLI) form a helical membrane-spanning segment. Over 396-407 (GRKRSHAGYQTI) the chain is Cytoplasmic.

The protein belongs to the LAMP family. Interacts with ABCB9; this interaction strongly stabilizes ABCB9 and protects ABCB9 against lysosomal degradation. Interacts with FURIN. Interacts with TMEM175; inhibiting the proton channel activity of TMEM175. O- and N-glycosylated; some of the N-glycans attached to LAMP-1 are polylactosaminoglycans.

The protein localises to the lysosome membrane. It localises to the endosome membrane. It is found in the late endosome membrane. Its subcellular location is the cell membrane. The protein resides in the cytolytic granule membrane. In terms of biological role, lysosomal membrane glycoprotein which plays an important role in lysosome biogenesis, lysosomal pH regulation, autophagy and cholesterol homeostasis. Acts as an important regulator of lysosomal lumen pH regulation by acting as a direct inhibitor of the proton channel TMEM175, facilitating lysosomal acidification for optimal hydrolase activity. Also plays an important role in NK-cells cytotoxicity. Mechanistically, participates in cytotoxic granule movement to the cell surface and perforin trafficking to the lytic granule. In addition, protects NK-cells from degranulation-associated damage induced by their own cytotoxic granule content. Presents carbohydrate ligands to selectins. The sequence is that of Lysosome-associated membrane glycoprotein 1 (LAMP1) from Cricetulus griseus (Chinese hamster).